The primary structure comprises 2701 residues: Centromere-associated protein E (2701 aa).

The Kinesin motor domain maps to 6-329; that stretch reads AVAVCVRVRP…LQFASTAKYM (324 aa). 86 to 93 contributes to the ATP binding site; sequence GQTASGKT. A coiled-coil region spans residues 336 to 2590; the sequence is NEVSTDEALL…SNEVKTWKER (2255 aa). Phosphoserine occurs at positions 611 and 2083. The tract at residues 2126-2476 is kinetochore-binding domain; that stretch reads KEIEFQKELS…IDLEKMKNAK (351 aa). The tract at residues 2355–2376 is disordered; sequence SGAQVNPTTQDNKNPHVTSRAT. Phosphoserine is present on S2389. The span at 2508 to 2527 shows a compositional bias: polar residues; that stretch reads QAQDTSVISEHTDPQPSNKP. 2 disordered regions span residues 2508–2533 and 2588–2701; these read QAQDTSVISEHTDPQPSNKPLTCGGG and KERT…CKTQ. Residues 2510-2698 are globular autoinhibitory domain; sequence QDTSVISEHT…ASSGKDVPEC (189 aa). Residues 2588 to 2600 are compositionally biased toward basic and acidic residues; the sequence is KERTLKREAHKQV. Residues 2601 to 2625 show a composition bias toward polar residues; sequence TCENSPKSPKVTGTASKKKQITPSQ. The segment covering 2626 to 2640 has biased composition (basic and acidic residues); it reads CKERNLQDPVPKESP. A phosphoserine mark is found at S2639, S2647, and S2651. C2698 carries the post-translational modification Cysteine methyl ester. Residue C2698 is the site of S-farnesyl cysteine attachment. A propeptide spans 2699–2701 (removed in mature form); sequence KTQ.

This sequence belongs to the TRAFAC class myosin-kinesin ATPase superfamily. Kinesin family. Monomer. Interacts with CENPF. Interacts with BUB1B. Interacts with SEPT7. Interacts with KIF18A. Interacts with PRC1. Interacts with NUF2; this interaction determines kinetochore localization. Interacts with SKAP; this interaction greatly favors SKAP binding to microtubules. Interacts with TRAPPC12. Interacts with CTCF. In terms of processing, the C-terminal inhibitory domain is phosphorylated. Phosphorylation relieves autoinhibition of the kinetochore motor. Sumoylated with SUMO2 and SUMO3. The sumoylation mediates the association to the kinetochore.

It localises to the chromosome. It is found in the centromere. Its subcellular location is the kinetochore. The protein resides in the cytoplasm. The protein localises to the cytoskeleton. It localises to the spindle. Functionally, microtubule plus-end-directed kinetochore motor which plays an important role in chromosome congression, microtubule-kinetochore conjugation and spindle assembly checkpoint activation. Drives chromosome congression (alignment of chromosomes at the spindle equator resulting in the formation of the metaphase plate) by mediating the lateral sliding of polar chromosomes along spindle microtubules towards the spindle equator and by aiding the establishment and maintenance of connections between kinetochores and spindle microtubules. The transport of pole-proximal chromosomes towards the spindle equator is favored by microtubule tracks that are detyrosinated. Acts as a processive bi-directional tracker of dynamic microtubule tips; after chromosomes have congressed, continues to play an active role at kinetochores, enhancing their links with dynamic microtubule ends. Suppresses chromosome congression in NDC80-depleted cells and contributes positively to congression only when microtubules are stabilized. Plays an important role in the formation of stable attachments between kinetochores and spindle microtubules The stabilization of kinetochore-microtubule attachment also requires CENPE-dependent localization of other proteins to the kinetochore including BUB1B, MAD1 and MAD2. Plays a role in spindle assembly checkpoint activation (SAC) via its interaction with BUB1B resulting in the activation of its kinase activity, which is important for activating SAC. Necessary for the mitotic checkpoint signal at individual kinetochores to prevent aneuploidy due to single chromosome loss. This chain is Centromere-associated protein E (CENPE), found in Homo sapiens (Human).